Reading from the N-terminus, the 1147-residue chain is Nitric oxide synthase, inducible (1147 aa).

Positions 22–51 (KDINNNVEKTPGAIPSPTTQDDPKSHKHQN) are disordered. Residues 23–27 (DINNN) carry the DINNN-motif; mediates interaction with SPSB1, SPSB2 and SPSB4 motif. Zn(2+) contacts are provided by Cys-107 and Cys-112. Residue Ser-115 coordinates (6R)-L-erythro-5,6,7,8-tetrahydrobiopterin. Cys-197 contributes to the heme b binding site. L-arginine is bound by residues Gln-260, Trp-369, Tyr-370, and Glu-374. (6R)-L-erythro-5,6,7,8-tetrahydrobiopterin-binding residues include Arg-378, Ile-459, Trp-460, and Phe-473. Tyr-488 contributes to the heme b binding site. The calmodulin-binding stretch occupies residues 512 to 532 (FTVLVKAVFFASVLMRKVMAS). The region spanning 536-674 (ATVLFATETG…AFRSWAVQTF (139 aa)) is the Flavodoxin-like domain. The FMN site is built by Thr-542, Glu-543, Thr-544, Lys-546, and Ser-547. A Phosphothreonine modification is found at Thr-564. Tyr-572 carries the post-translational modification Phosphotyrosine. Positions 588, 589, 625, 632, 658, and 662 each coordinate FMN. Residues 727-967 (KNVFTMRLKS…VRSVSGFQLP (241 aa)) enclose the FAD-binding FR-type domain. NADP(+) is bound at residue Arg-747. Positions 769, 903, 905, 906, 921, and 923 each coordinate FAD. An NADP(+)-binding site is contributed by Thr-926. FAD-binding residues include Tyr-927, Val-940, Cys-941, and Ser-942. The NADP(+) site is built by Thr-981, Arg-1014, Ser-1043, Arg-1044, Lys-1050, Tyr-1052, Gln-1054, and Asp-1087.

This sequence belongs to the NOS family. In terms of assembly, homodimer. Interacts with NHERF1. Interacts with GAPDH; induced by oxidatively-modified low-densitity lipoprotein (LDL(ox)). Interacts with S100A8 and S100A9 to form the iNOS-S100A8/9 transnitrosylase complex. Interacts with SPSB1, SPSB2 and SPSB4. Interacts with ELOC and CUL5 in the presence of SPSB1 or SPSB2 or SPSB4. Forms a complex with ASL, ASS1 and HSP90AA1; the complex regulates cell-autonomous L-arginine synthesis and citrulline recycling while channeling extracellular L-arginine to nitric oxide synthesis pathway. Heme b serves as cofactor. FAD is required as a cofactor. The cofactor is FMN. Requires (6R)-L-erythro-5,6,7,8-tetrahydrobiopterin as cofactor. Polyubiquitinated; mediated by SPSB1, SPSB2 and SPSB4, leading to proteasomal degradation. As to expression, in normal kidney, expressed primarily in the medullary thick ascending limb, with minor amounts in the medullary collecting duct and vasa recta bundle.

The protein localises to the cytoplasm. The protein resides in the cytosol. It carries out the reaction 2 L-arginine + 3 NADPH + 4 O2 + H(+) = 2 L-citrulline + 2 nitric oxide + 3 NADP(+) + 4 H2O. With respect to regulation, not stimulated by calcium/calmodulin. Aspirin inhibits expression and function of this enzyme and effects may be exerted at the level of translational/post-translational modification and directly on the catalytic activity. Functionally, produces nitric oxide (NO) which is a messenger molecule with diverse functions throughout the body. In macrophages, NO mediates tumoricidal and bactericidal actions. Also has nitrosylase activity and mediates cysteine S-nitrosylation of cytoplasmic target proteins such PTGS2/COX2. As component of the iNOS-S100A8/9 transnitrosylase complex involved in the selective inflammatory stimulus-dependent S-nitrosylation of GAPDH implicated in regulation of the GAIT complex activity and probably multiple targets including ANXA5, EZR, MSN and VIM. Involved in inflammation, enhances the synthesis of pro-inflammatory mediators such as IL6 and IL8. The protein is Nitric oxide synthase, inducible (Nos2) of Rattus norvegicus (Rat).